The following is a 123-amino-acid chain: Cytochrome c-555 (123 aa).

An N-terminal signal peptide occupies residues 1-27 (MDHKKTSIRTTALAALVLGAVAAPAFS). Heme c is bound by residues Cys-46, Cys-49, His-50, and Met-86.

In terms of processing, binds 1 heme c group covalently per subunit.

The sequence is that of Cytochrome c-555 from Methylococcus capsulatus (strain ATCC 33009 / NCIMB 11132 / Bath).